A 219-amino-acid polypeptide reads, in one-letter code: Urease accessory protein UreG (219 aa).

The interval 1–20 (MSALHSIPHRSKKLPPLRVG) is disordered. A GTP-binding site is contributed by 23–30 (GPVGSGKT).

Belongs to the SIMIBI class G3E GTPase family. UreG subfamily. Homodimer. UreD, UreF and UreG form a complex that acts as a GTP-hydrolysis-dependent molecular chaperone, activating the urease apoprotein by helping to assemble the nickel containing metallocenter of UreC. The UreE protein probably delivers the nickel.

The protein resides in the cytoplasm. Its function is as follows. Facilitates the functional incorporation of the urease nickel metallocenter. This process requires GTP hydrolysis, probably effectuated by UreG. This is Urease accessory protein UreG from Methylibium petroleiphilum (strain ATCC BAA-1232 / LMG 22953 / PM1).